Consider the following 804-residue polypeptide: Leucine--tRNA ligase (804 aa).

The short motif at 39–50 is the 'HIGH' region element; sequence PYPSGAGLHVGH. A 'KMSKS' region motif is present at residues 580–584; that stretch reads KMSKS. Lysine 583 contributes to the ATP binding site.

This sequence belongs to the class-I aminoacyl-tRNA synthetase family.

Its subcellular location is the cytoplasm. The enzyme catalyses tRNA(Leu) + L-leucine + ATP = L-leucyl-tRNA(Leu) + AMP + diphosphate. The protein is Leucine--tRNA ligase of Mycoplasma mycoides subsp. mycoides SC (strain CCUG 32753 / NCTC 10114 / PG1).